The primary structure comprises 86 residues: Small ribosomal subunit protein bS16 (86 aa).

The protein belongs to the bacterial ribosomal protein bS16 family.

The chain is Small ribosomal subunit protein bS16 from Syntrophotalea carbinolica (strain DSM 2380 / NBRC 103641 / GraBd1) (Pelobacter carbinolicus).